We begin with the raw amino-acid sequence, 456 residues long: Probable glycine dehydrogenase (decarboxylating) subunit 1 (456 aa).

This sequence belongs to the GcvP family. N-terminal subunit subfamily. The glycine cleavage system is composed of four proteins: P, T, L and H. In this organism, the P 'protein' is a heterodimer of two subunits.

The catalysed reaction is N(6)-[(R)-lipoyl]-L-lysyl-[glycine-cleavage complex H protein] + glycine + H(+) = N(6)-[(R)-S(8)-aminomethyldihydrolipoyl]-L-lysyl-[glycine-cleavage complex H protein] + CO2. In terms of biological role, the glycine cleavage system catalyzes the degradation of glycine. The P protein binds the alpha-amino group of glycine through its pyridoxal phosphate cofactor; CO(2) is released and the remaining methylamine moiety is then transferred to the lipoamide cofactor of the H protein. The sequence is that of Probable glycine dehydrogenase (decarboxylating) subunit 1 from Legionella pneumophila subsp. pneumophila (strain Philadelphia 1 / ATCC 33152 / DSM 7513).